A 701-amino-acid chain; its full sequence is Elongation factor G (701 aa).

The region spanning 10-286 (NKVRNIGIMA…AVIDYLPSPL (277 aa)) is the tr-type G domain. Residues 19 to 26 (AHIDAGKT), 83 to 87 (DTPGH), and 137 to 140 (NKMD) contribute to the GTP site.

It belongs to the TRAFAC class translation factor GTPase superfamily. Classic translation factor GTPase family. EF-G/EF-2 subfamily.

It localises to the cytoplasm. Catalyzes the GTP-dependent ribosomal translocation step during translation elongation. During this step, the ribosome changes from the pre-translocational (PRE) to the post-translocational (POST) state as the newly formed A-site-bound peptidyl-tRNA and P-site-bound deacylated tRNA move to the P and E sites, respectively. Catalyzes the coordinated movement of the two tRNA molecules, the mRNA and conformational changes in the ribosome. This is Elongation factor G from Mycobacteroides abscessus (strain ATCC 19977 / DSM 44196 / CCUG 20993 / CIP 104536 / JCM 13569 / NCTC 13031 / TMC 1543 / L948) (Mycobacterium abscessus).